A 663-amino-acid polypeptide reads, in one-letter code: UvrABC system protein B (663 aa).

Residues 26 to 414 enclose the Helicase ATP-binding domain; that stretch reads DGLESGLAKQ…DNVAEQVVRP (389 aa). 39-46 is an ATP binding site; sequence GVTGSGKT. The Beta-hairpin signature appears at 92–115; the sequence is YYDYYQPEAYVPASDTFIEKDASI. Residues 430–596 enclose the Helicase C-terminal domain; that stretch reads QVDDLMSEIR…GINKSVEDIL (167 aa). One can recognise a UVR domain in the interval 624–659; sequence AKQINALEKQMYAHAQNMEFELAAKIRDEYLLLKEQ.

The protein belongs to the UvrB family. Forms a heterotetramer with UvrA during the search for lesions. Interacts with UvrC in an incision complex.

Its subcellular location is the cytoplasm. The UvrABC repair system catalyzes the recognition and processing of DNA lesions. A damage recognition complex composed of 2 UvrA and 2 UvrB subunits scans DNA for abnormalities. Upon binding of the UvrA(2)B(2) complex to a putative damaged site, the DNA wraps around one UvrB monomer. DNA wrap is dependent on ATP binding by UvrB and probably causes local melting of the DNA helix, facilitating insertion of UvrB beta-hairpin between the DNA strands. Then UvrB probes one DNA strand for the presence of a lesion. If a lesion is found the UvrA subunits dissociate and the UvrB-DNA preincision complex is formed. This complex is subsequently bound by UvrC and the second UvrB is released. If no lesion is found, the DNA wraps around the other UvrB subunit that will check the other stand for damage. This is UvrABC system protein B from Legionella pneumophila (strain Lens).